A 164-amino-acid polypeptide reads, in one-letter code: Ecotin (164 aa).

A signal peptide spans 1-20 (MKMFVPAVVFAALASASAWA). A disulfide bond links C72 and C109.

It belongs to the protease inhibitor I11 (ecotin) family. In terms of assembly, homodimer.

Its subcellular location is the periplasm. Functionally, general inhibitor of pancreatic serine proteases: inhibits chymotrypsin, trypsin, elastases, factor X, kallikrein as well as a variety of other proteases. This Salmonella typhi protein is Ecotin.